Consider the following 282-residue polypeptide: MPTAANLLAIMPFPDIDPIAFSIGPLAIHWYGLAYVAGILLGWAYARRLAANESLWPGNASPMTRTQLDDFIVWAALGVVLGGRLGYIFFYDLPAVLRSPVRALEIWNGGMSFHGGLTGTTIAMIIFARRNGIPIWSLFDIVATVVPFGLFFGRIANFINGELWGRLTDVPWAVVFPTGGPFARHPSQLYEAGLEGIVLLLVLAALVYGMRALKSPGFITGVFVCGYALSRIFVEFFREPDAQLGYLLGTNWLTMGMVLSSPMILLGLWAMLRARRQAALQL.

The next 4 membrane-spanning stretches (helical) occupy residues 23-43, 71-91, 106-126, and 132-152; these read IGPL…LLGW, FIVW…IFFY, IWNG…AMII, and GIPI…GLFF. R154 is a binding site for a 1,2-diacyl-sn-glycero-3-phospho-(1'-sn-glycerol). 3 consecutive transmembrane segments (helical) span residues 189–209, 217–237, and 252–272; these read LYEA…LVYG, GFIT…VEFF, and WLTM…WAML.

The protein belongs to the Lgt family.

It is found in the cell inner membrane. The enzyme catalyses L-cysteinyl-[prolipoprotein] + a 1,2-diacyl-sn-glycero-3-phospho-(1'-sn-glycerol) = an S-1,2-diacyl-sn-glyceryl-L-cysteinyl-[prolipoprotein] + sn-glycerol 1-phosphate + H(+). It functions in the pathway protein modification; lipoprotein biosynthesis (diacylglyceryl transfer). In terms of biological role, catalyzes the transfer of the diacylglyceryl group from phosphatidylglycerol to the sulfhydryl group of the N-terminal cysteine of a prolipoprotein, the first step in the formation of mature lipoproteins. This Rhizobium leguminosarum bv. trifolii (strain WSM2304) protein is Phosphatidylglycerol--prolipoprotein diacylglyceryl transferase.